A 190-amino-acid chain; its full sequence is Protein PLANT CADMIUM RESISTANCE 8 (190 aa).

Positions 1–31 (MGRVTTPSEEDSNNGLPVQQPGTPNQRTRVP) are disordered. The span at 13–28 (NNGLPVQQPGTPNQRT) shows a compositional bias: polar residues. Thr23 is subject to Phosphothreonine. The chain crosses the membrane as a helical span at residues 94 to 113 (LGTFMYLLMMPALCSHWVMG).

It belongs to the cornifelin family.

The protein localises to the cell membrane. In terms of biological role, may be involved in heavy metals transport. The protein is Protein PLANT CADMIUM RESISTANCE 8 (PCR8) of Arabidopsis thaliana (Mouse-ear cress).